Consider the following 376-residue polypeptide: tRNA-specific 2-thiouridylase MnmA (376 aa).

Residues 10 to 17 (GMSGGVDS) and Met-36 contribute to the ATP site. Residues 96 to 98 (NPD) are interaction with target base in tRNA. The active-site Nucleophile is the Cys-101. A disulfide bond links Cys-101 and Cys-198. Gly-125 contacts ATP. The interaction with tRNA stretch occupies residues 148-150 (KDQ). Cys-198 (cysteine persulfide intermediate) is an active-site residue. Residues 305–306 (RY) form an interaction with tRNA region.

The protein belongs to the MnmA/TRMU family.

The protein localises to the cytoplasm. It catalyses the reaction S-sulfanyl-L-cysteinyl-[protein] + uridine(34) in tRNA + AH2 + ATP = 2-thiouridine(34) in tRNA + L-cysteinyl-[protein] + A + AMP + diphosphate + H(+). Catalyzes the 2-thiolation of uridine at the wobble position (U34) of tRNA, leading to the formation of s(2)U34. The polypeptide is tRNA-specific 2-thiouridylase MnmA (Protochlamydia amoebophila (strain UWE25)).